We begin with the raw amino-acid sequence, 528 residues long: Catalase (528 aa).

The segment covering 1–22 (MADRREKSADQMKLWKESRANQ) has biased composition (basic and acidic residues). The tract at residues 1 to 32 (MADRREKSADQMKLWKESRANQKPDVLTTGGG) is disordered. Residues H75 and N148 contribute to the active site. Residues H194, S201, R203, N213, K237, W303, H305, and K306 each coordinate NADP(+). Y358 is a binding site for heme. Residues 525–528 (KANL) carry the Microbody targeting signal; atypical motif.

This sequence belongs to the catalase family. Homotetramer. It depends on heme as a cofactor. Requires NADP(+) as cofactor.

It is found in the peroxisome matrix. It carries out the reaction 2 H2O2 = O2 + 2 H2O. Its function is as follows. Catalyzes the degradation of hydrogen peroxide (H(2)O(2)) generated by peroxisomal oxidases to water and oxygen, thereby protecting cells from the toxic effects of hydrogen peroxide. The chain is Catalase (cat) from Glandirana rugosa (Japanese wrinkled frog).